A 176-amino-acid chain; its full sequence is Protein MAL2 (176 aa).

Topologically, residues 1-34 (MSAGGAPVPPPPNPAMSFPAPRVTLPAGPDILRT) are cytoplasmic. The 145-residue stretch at 31–175 (ILRTYSGAFV…SLGLALRRWR (145 aa)) folds into the MARVEL domain. A helical membrane pass occupies residues 35-55 (YSGAFVCLEIVFGGLVWILVA). The Lumenal segment spans residues 56–66 (SSNVPLPLLQG). The helical transmembrane segment at 67–87 (WVMFVSVTAFVCSLLFLGVFL) threads the bilayer. Over 88-102 (SGVVTQINANWNFLD) the chain is Cytoplasmic. Residues 103-123 (FAYHFTVFVFYFGAFLLEAAT) form a helical membrane-spanning segment. The Lumenal portion of the chain corresponds to 124–149 (TSLHDLRCNRTMTVQPLLSDNQYNIN). A glycan (N-linked (GlcNAc...) asparagine) is linked at N132. A helical transmembrane segment spans residues 150 to 170 (VAATIFAFVTTACYGCSLGLA). Over 171 to 176 (LRRWRP) the chain is Cytoplasmic.

Belongs to the MAL family. Interacts with TPD52L2.

The protein localises to the cell membrane. Its subcellular location is the apical cell membrane. Its function is as follows. Member of the machinery of polarized transport. Required for the indirect transcytotic route at the step of the egress of the transcytosing cargo from perinuclear endosomes in order for it to travel to the apical surface via a raft-dependent pathway. In Bos taurus (Bovine), this protein is Protein MAL2 (MAL2).